A 40-amino-acid chain; its full sequence is uncharacterized protein (40 aa).

The chain crosses the membrane as a helical span at residues Thr-20–Ile-37.

The protein localises to the membrane. This is an uncharacterized protein from Archaeoglobus fulgidus (strain ATCC 49558 / DSM 4304 / JCM 9628 / NBRC 100126 / VC-16).